Here is a 123-residue protein sequence, read N- to C-terminus: Large ribosomal subunit protein bL20 (123 aa).

A compositionally biased stretch (basic residues) spans 1–15 (MARVKRSVNAKKKRR). The disordered stretch occupies residues 1-23 (MARVKRSVNAKKKRREVLDQASG).

The protein belongs to the bacterial ribosomal protein bL20 family.

Its function is as follows. Binds directly to 23S ribosomal RNA and is necessary for the in vitro assembly process of the 50S ribosomal subunit. It is not involved in the protein synthesizing functions of that subunit. This Cutibacterium acnes (strain DSM 16379 / KPA171202) (Propionibacterium acnes) protein is Large ribosomal subunit protein bL20.